The following is a 190-amino-acid chain: Recombination protein RecR (190 aa).

The segment at 58–73 (CEQCGALSENELCEIC) adopts a C4-type zinc-finger fold. The Toprim domain occupies 81 to 167 (NILCIVESPK…TFSKIAQGIP (87 aa)).

The protein belongs to the RecR family.

In terms of biological role, may play a role in DNA repair. It seems to be involved in an RecBC-independent recombinational process of DNA repair. It may act with RecF and RecO. This is Recombination protein RecR from Campylobacter jejuni subsp. doylei (strain ATCC BAA-1458 / RM4099 / 269.97).